Reading from the N-terminus, the 1342-residue chain is DNA-directed RNA polymerase subunit beta (1342 aa).

It belongs to the RNA polymerase beta chain family. The RNAP catalytic core consists of 2 alpha, 1 beta, 1 beta' and 1 omega subunit. When a sigma factor is associated with the core the holoenzyme is formed, which can initiate transcription.

The catalysed reaction is RNA(n) + a ribonucleoside 5'-triphosphate = RNA(n+1) + diphosphate. In terms of biological role, DNA-dependent RNA polymerase catalyzes the transcription of DNA into RNA using the four ribonucleoside triphosphates as substrates. The sequence is that of DNA-directed RNA polymerase subunit beta from Pseudoalteromonas atlantica (strain T6c / ATCC BAA-1087).